A 265-amino-acid chain; its full sequence is Transcription factor LBX1 (265 aa).

Residues 1–20 (MTSKDEAKSSSVEERRRHAL) are compositionally biased toward basic and acidic residues. The interval 1 to 33 (MTSKDEAKSSSVEERRRHALDLLPPPANSNKPL) is disordered. A DNA-binding region (homeobox) is located at residues 125-184 (RRKSRTAFTNHQIYELEKRFLYQKYLSPADRDQIAQQLGLTNAQVITWFQNRRAKLKRDL). A disordered region spans residues 212–265 (EEETNSVRDDSRSRSPQLGLSGHMPLSPSSPLTEQHTSKECSEDEEDVEIDVDD). The span at 253 to 265 (SEDEEDVEIDVDD) shows a compositional bias: acidic residues.

The protein localises to the nucleus. Transcription factor that controls hypaxial muscle development by down-regulating myod1 and cdkn1b/p27, thereby allowing myoblasts to proliferate before the onset of terminal differentiation. In Xenopus tropicalis (Western clawed frog), this protein is Transcription factor LBX1.